The following is a 158-amino-acid chain: Cytochrome c-type biogenesis protein CcmE (158 aa).

Over 1–8 (MNIRRRRR) the chain is Cytoplasmic. The chain crosses the membrane as a helical; Signal-anchor for type II membrane protein span at residues 9–29 (LLVVVAILVGLGLATGLVMYA). The Periplasmic portion of the chain corresponds to 30 to 158 (LRSNIDLFYT…GLLNVSEPTR (129 aa)). H130 and Y134 together coordinate heme.

It belongs to the CcmE/CycJ family.

The protein localises to the cell inner membrane. Its function is as follows. Heme chaperone required for the biogenesis of c-type cytochromes. Transiently binds heme delivered by CcmC and transfers the heme to apo-cytochromes in a process facilitated by CcmF and CcmH. The protein is Cytochrome c-type biogenesis protein CcmE of Tatumella citrea (Pantoea citrea).